Reading from the N-terminus, the 43-residue chain is Protein PsbN (43 aa).

Residues 7 to 27 form a helical membrane-spanning segment; it reads VAIFISGLLVSFTGYALYTAF.

It belongs to the PsbN family.

The protein localises to the plastid. It is found in the chloroplast thylakoid membrane. In terms of biological role, may play a role in photosystem I and II biogenesis. The sequence is that of Protein PsbN from Sagittaria latifolia (Broadleaf arrowhead).